The sequence spans 104 residues: MSLYRSKVWCVYIVRRDDGQLYTGITSDLSRRLGEHARGVGARCLRGAKRLQLLYCSASAYDHKTAAQMEYHLKRKRGKYFKLRLIKAQPRFLHQYLSADKPLR.

The 77-residue stretch at 7 to 83 (KVWCVYIVRR…KRKRGKYFKL (77 aa)) folds into the GIY-YIG domain.

The protein belongs to the UPF0213 family.

In Orgyia pseudotsugata (Douglas-fir tussock moth), this protein is UPF0213 protein ORF82.